Reading from the N-terminus, the 127-residue chain is Glycine cleavage system H protein (127 aa).

The Lipoyl-binding domain maps to 22–104; sequence EAVIGITQFA…YTDGWMVRVK (83 aa). Lysine 63 is subject to N6-lipoyllysine.

This sequence belongs to the GcvH family. As to quaternary structure, the glycine cleavage system is composed of four proteins: P, T, L and H. (R)-lipoate serves as cofactor.

Functionally, the glycine cleavage system catalyzes the degradation of glycine. The H protein shuttles the methylamine group of glycine from the P protein to the T protein. This chain is Glycine cleavage system H protein, found in Nitratidesulfovibrio vulgaris (strain DSM 19637 / Miyazaki F) (Desulfovibrio vulgaris).